Here is a 556-residue protein sequence, read N- to C-terminus: Dihydroxy-acid dehydratase (556 aa).

D78 provides a ligand contact to Mg(2+). C119 is a binding site for [2Fe-2S] cluster. D120 and K121 together coordinate Mg(2+). Position 121 is an N6-carboxylysine (K121). C191 contributes to the [2Fe-2S] cluster binding site. A Mg(2+)-binding site is contributed by E442. Catalysis depends on S468, which acts as the Proton acceptor.

It belongs to the IlvD/Edd family. Homodimer. [2Fe-2S] cluster is required as a cofactor. It depends on Mg(2+) as a cofactor.

It carries out the reaction (2R)-2,3-dihydroxy-3-methylbutanoate = 3-methyl-2-oxobutanoate + H2O. The catalysed reaction is (2R,3R)-2,3-dihydroxy-3-methylpentanoate = (S)-3-methyl-2-oxopentanoate + H2O. It functions in the pathway amino-acid biosynthesis; L-isoleucine biosynthesis; L-isoleucine from 2-oxobutanoate: step 3/4. It participates in amino-acid biosynthesis; L-valine biosynthesis; L-valine from pyruvate: step 3/4. Functionally, functions in the biosynthesis of branched-chain amino acids. Catalyzes the dehydration of (2R,3R)-2,3-dihydroxy-3-methylpentanoate (2,3-dihydroxy-3-methylvalerate) into 2-oxo-3-methylpentanoate (2-oxo-3-methylvalerate) and of (2R)-2,3-dihydroxy-3-methylbutanoate (2,3-dihydroxyisovalerate) into 2-oxo-3-methylbutanoate (2-oxoisovalerate), the penultimate precursor to L-isoleucine and L-valine, respectively. The chain is Dihydroxy-acid dehydratase from Clostridium beijerinckii (strain ATCC 51743 / NCIMB 8052) (Clostridium acetobutylicum).